The primary structure comprises 898 residues: Alanine--tRNA ligase (898 aa).

H582, H586, C685, and H689 together coordinate Zn(2+).

Belongs to the class-II aminoacyl-tRNA synthetase family. Zn(2+) is required as a cofactor.

It is found in the cytoplasm. It carries out the reaction tRNA(Ala) + L-alanine + ATP = L-alanyl-tRNA(Ala) + AMP + diphosphate. Catalyzes the attachment of alanine to tRNA(Ala) in a two-step reaction: alanine is first activated by ATP to form Ala-AMP and then transferred to the acceptor end of tRNA(Ala). Also edits incorrectly charged Ser-tRNA(Ala) and Gly-tRNA(Ala) via its editing domain. The protein is Alanine--tRNA ligase of Mycolicibacterium vanbaalenii (strain DSM 7251 / JCM 13017 / BCRC 16820 / KCTC 9966 / NRRL B-24157 / PYR-1) (Mycobacterium vanbaalenii).